We begin with the raw amino-acid sequence, 341 residues long: Platelet-activating factor receptor (341 aa).

Topologically, residues 1-16 (MEQNGSFRVDSEFRYT) are extracellular. A glycan (N-linked (GlcNAc...) asparagine) is linked at asparagine 4. The helical transmembrane segment at 17–38 (LFPIVYSVIFVLGVVANGYVLW) threads the bilayer. The Cytoplasmic segment spans residues 39 to 54 (VFATLYPSKKLNEIKI). The chain crosses the membrane as a helical span at residues 55 to 74 (FMVNLTVADLLFLMTLPLWI). Topologically, residues 75-91 (VYYSNEGDWIVHKFLCN) are extracellular. Cysteine 90 and cysteine 173 are oxidised to a cystine. The helical transmembrane segment at 92 to 113 (LAGCLFFINTYCSVAFLGVITY) threads the bilayer. At 114–133 (NRYQAVAYPIKTAQATTRKR) the chain is on the cytoplasmic side. Residues 134 to 155 (GITLSLVIWISIAATASYFLAT) form a helical membrane-spanning segment. Over 156–184 (DSTNVVPKKDGSGNITRCFEHYEPYSVPI) the chain is Extracellular. N-linked (GlcNAc...) asparagine glycosylation occurs at asparagine 169. The chain crosses the membrane as a helical span at residues 185-205 (LVVHIFITSCFFLVFFLIFYC). The Cytoplasmic portion of the chain corresponds to 206–233 (NMVIIHTLLTRPVRQQRKPEVKRRALWM). A helical transmembrane segment spans residues 234-254 (VCTVLAVFVICFVPHHVVQLP). The Extracellular portion of the chain corresponds to 255-275 (WTLAELGYQTNFHQAINDAHQ). A helical membrane pass occupies residues 276-295 (ITLCLLSTNCVLDPVIYCFL). Residues 296-341 (TKKFRKHLSEKFYSMRSSRKCSRATSDTCTEVMMPANQTPVLPLKN) are Cytoplasmic-facing.

The protein belongs to the G-protein coupled receptor 1 family. Interacts with ARRB1. In terms of tissue distribution, present in almost all organs including spleen, small intestine, kidney, lung, liver and brain.

The protein resides in the cell membrane. Its function is as follows. Receptor for platelet activating factor, a chemotactic phospholipid mediator that possesses potent inflammatory, smooth-muscle contractile and hypotensive activity. Seems to mediate its action via a G protein that activates a phosphatidylinositol-calcium second messenger system. The chain is Platelet-activating factor receptor (Ptafr) from Rattus norvegicus (Rat).